A 178-amino-acid polypeptide reads, in one-letter code: Large ribosomal subunit protein uL6 (178 aa).

Belongs to the universal ribosomal protein uL6 family. In terms of assembly, part of the 50S ribosomal subunit.

Its function is as follows. This protein binds to the 23S rRNA, and is important in its secondary structure. It is located near the subunit interface in the base of the L7/L12 stalk, and near the tRNA binding site of the peptidyltransferase center. In Francisella tularensis subsp. tularensis (strain WY96-3418), this protein is Large ribosomal subunit protein uL6.